A 267-amino-acid polypeptide reads, in one-letter code: 4-hydroxy-tetrahydrodipicolinate reductase (267 aa).

Position 8–13 (8–13) interacts with NAD(+); sequence GASGRM. NADP(+) is bound at residue R35. NAD(+)-binding positions include 98-100 and 122-125; these read GTT and APNM. H155 functions as the Proton donor/acceptor in the catalytic mechanism. H156 is a binding site for (S)-2,3,4,5-tetrahydrodipicolinate. The active-site Proton donor is the K159. 165–166 is a binding site for (S)-2,3,4,5-tetrahydrodipicolinate; that stretch reads GT.

This sequence belongs to the DapB family.

The protein localises to the cytoplasm. The enzyme catalyses (S)-2,3,4,5-tetrahydrodipicolinate + NAD(+) + H2O = (2S,4S)-4-hydroxy-2,3,4,5-tetrahydrodipicolinate + NADH + H(+). The catalysed reaction is (S)-2,3,4,5-tetrahydrodipicolinate + NADP(+) + H2O = (2S,4S)-4-hydroxy-2,3,4,5-tetrahydrodipicolinate + NADPH + H(+). It participates in amino-acid biosynthesis; L-lysine biosynthesis via DAP pathway; (S)-tetrahydrodipicolinate from L-aspartate: step 4/4. In terms of biological role, catalyzes the conversion of 4-hydroxy-tetrahydrodipicolinate (HTPA) to tetrahydrodipicolinate. This is 4-hydroxy-tetrahydrodipicolinate reductase from Hahella chejuensis (strain KCTC 2396).